Here is a 60-residue protein sequence, read N- to C-terminus: Large ribosomal subunit protein bL32 (60 aa).

The protein belongs to the bacterial ribosomal protein bL32 family.

This is Large ribosomal subunit protein bL32 from Paramagnetospirillum magneticum (strain ATCC 700264 / AMB-1) (Magnetospirillum magneticum).